The following is a 118-amino-acid chain: MIKGIGLDMIDLDRVKQAVEKNPRFIERILTEKETKQYEKYEGSRKIEFLAGRFAAKEAYAKANGTGFGKHLSFTDVEILQVEDGRPHVTMPIKQGETVFVSITHTARSAAAQVIIEQ.

Mg(2+) is bound by residues D8 and E58.

The protein belongs to the P-Pant transferase superfamily. AcpS family. Mg(2+) is required as a cofactor.

Its subcellular location is the cytoplasm. The enzyme catalyses apo-[ACP] + CoA = holo-[ACP] + adenosine 3',5'-bisphosphate + H(+). Its function is as follows. Transfers the 4'-phosphopantetheine moiety from coenzyme A to a Ser of acyl-carrier-protein. The chain is Holo-[acyl-carrier-protein] synthase from Listeria innocua serovar 6a (strain ATCC BAA-680 / CLIP 11262).